The chain runs to 574 residues: Excitatory amino acid transporter 2 (574 aa).

Residues 1–44 (MASTEGANNMPKQVEVRMHDSHLGSEEPKHRHLGLRLCDKLGKN) lie on the Cytoplasmic side of the membrane. 3 positions are modified to phosphoserine: Ser3, Ser21, and Ser25. A lipid anchor (S-palmitoyl cysteine) is attached at Cys38. A helical transmembrane segment spans residues 45 to 64 (LLLTLTVFGVILGAVCGGLL). The Extracellular segment spans residues 65–87 (RLASPIHPDVVMLIAFPGDILMR). Residues 88 to 108 (MLKMLILPLIISSLITGLSGL) traverse the membrane as a helical segment. At 109-120 (DAKASGRLGTRA) the chain is on the cytoplasmic side. The helical transmembrane segment at 121 to 142 (MVYYMSTTIIAAVLGVILVLAI) threads the bilayer. The Extracellular portion of the chain corresponds to 143–235 (HPGNPKLKKQ…TKMVIKKGLE (93 aa)). Asn206 and Asn216 each carry an N-linked (GlcNAc...) asparagine glycan. The chain crosses the membrane as a helical span at residues 236 to 259 (FKDGMNVLGLIGFFIAFGIAMGKM). The Cytoplasmic portion of the chain corresponds to 260–268 (GDQAKLMVD). Residues 269–296 (FFNILNEIVMKLVIMIMWYSPLGIACLI) traverse the membrane as a helical segment. The Extracellular portion of the chain corresponds to 297 to 317 (CGKIIAIKDLEVVARQLGMYM). Residues 318–339 (VTVIIGLIIHGGIFLPLIYFVV) form a helical membrane-spanning segment. Residues 340-344 (TRKNP) are Cytoplasmic-facing. An intramembrane region (discontinuously helical) is located at residues 345–375 (FSFFAGIFQAWITALGTASSAGTLPVTFRCL). Residue 362–364 (ASS) participates in L-aspartate binding. The Cytoplasmic segment spans residues 376-384 (EENLGIDKR). A helical transmembrane segment spans residues 385-411 (VTRFVLPVGATINMDGTALYEAVAAIF). The Na(+) site is built by Gly393, Thr395, and Asn397. Thr401 contacts L-aspartate. Residues 412–424 (IAQMNGVVLDGGQ) lie on the Extracellular side of the membrane. The segment at residues 425-458 (IVTVSLTATLASVGAASIPSAGLVTMLLILTAVG) is an intramembrane region (discontinuously helical). Position 442–446 (442–446 (IPSAG)) interacts with L-aspartate. At 459–471 (LPTEDISLLVAVD) the chain is on the extracellular side. The helical transmembrane segment at 472–493 (WLLDRMRTSVNVVGDSFGAGIV) threads the bilayer. The L-aspartate site is built by Asp475 and Asn482. Residues Asn482 and Asp486 each contribute to the Na(+) site. Residues 494-574 (YHLSKSELDT…VEEEPWKREK (81 aa)) are Cytoplasmic-facing. Residues Ser506, Ser521, Ser532, and Ser534 each carry the phosphoserine modification. Tyr539 bears the Phosphotyrosine mark. A phosphoserine mark is found at Ser544, Ser560, and Ser564.

Belongs to the dicarboxylate/amino acid:cation symporter (DAACS) (TC 2.A.23) family. SLC1A2 subfamily. Homotrimer. Isoform 3 can oligomerize with isoform 1. Interacts with AJUBA. In terms of processing, glycosylated. Palmitoylation at Cys-38 is not required for correct subcellular localization, but is important for glutamate uptake activity.

Its subcellular location is the cell membrane. The catalysed reaction is K(+)(in) + L-glutamate(out) + 3 Na(+)(out) + H(+)(out) = K(+)(out) + L-glutamate(in) + 3 Na(+)(in) + H(+)(in). It carries out the reaction K(+)(in) + L-aspartate(out) + 3 Na(+)(out) + H(+)(out) = K(+)(out) + L-aspartate(in) + 3 Na(+)(in) + H(+)(in). It catalyses the reaction D-aspartate(out) + K(+)(in) + 3 Na(+)(out) + H(+)(out) = D-aspartate(in) + K(+)(out) + 3 Na(+)(in) + H(+)(in). Its function is as follows. Sodium-dependent, high-affinity amino acid transporter that mediates the uptake of L-glutamate and also L-aspartate and D-aspartate. Functions as a symporter that transports one amino acid molecule together with two or three Na(+) ions and one proton, in parallel with the counter-transport of one K(+) ion. Mediates Cl(-) flux that is not coupled to amino acid transport; this avoids the accumulation of negative charges due to aspartate and Na(+) symport. Essential for the rapid removal of released glutamate from the synaptic cleft, and for terminating the postsynaptic action of glutamate. The polypeptide is Excitatory amino acid transporter 2 (Homo sapiens (Human)).